A 182-amino-acid chain; its full sequence is UPF0301 protein CHU_1773 (182 aa).

The protein belongs to the UPF0301 (AlgH) family.

In Cytophaga hutchinsonii (strain ATCC 33406 / DSM 1761 / CIP 103989 / NBRC 15051 / NCIMB 9469 / D465), this protein is UPF0301 protein CHU_1773.